The chain runs to 146 residues: Suppressor APC domain-containing protein 1 (146 aa).

The disordered stretch occupies residues 121–146 (HRKGVTQSTGEVVSQAPPGPKGPTLV). The segment covering 137–146 (PPGPKGPTLV) has biased composition (pro residues).

The polypeptide is Suppressor APC domain-containing protein 1 (Sapcd1) (Mus musculus (Mouse)).